A 215-amino-acid chain; its full sequence is Small ribosomal subunit protein uS7 (215 aa).

Belongs to the universal ribosomal protein uS7 family. In terms of assembly, part of the 30S ribosomal subunit.

In terms of biological role, one of the primary rRNA binding proteins, it binds directly to 16S rRNA where it nucleates assembly of the head domain of the 30S subunit. Is located at the subunit interface close to the decoding center. This Thermococcus gammatolerans (strain DSM 15229 / JCM 11827 / EJ3) protein is Small ribosomal subunit protein uS7.